The following is a 1765-amino-acid chain: Tight junction protein ZO-1 (1765 aa).

One can recognise a PDZ 1 domain in the interval 23–110; it reads TVTLHRAPGF…NAKITIRRKK (88 aa). Basic residues predominate over residues 102–112; it reads AKITIRRKKKV. The segment at 102–189 is disordered; sequence AKITIRRKKK…QPAKPTKVTL (88 aa). The segment covering 123-136 has biased composition (acidic residues); it reads PVSDNEDDSYDEDV. S125 bears the Phosphoserine mark. Y132 is modified (phosphotyrosine). Residues 149–175 show a composition bias toward basic and acidic residues; that stretch reads RRGEKSWARDRSASRDRSLSPRSDRRS. Residues S175, S178, and S179 each carry the phosphoserine modification. Position 185 is a phosphothreonine (T185). A PDZ 2 domain is found at 186–264; sequence KVTLVKSRKN…KLKMVVQRDE (79 aa). S212 and S241 each carry phosphoserine. T267 is modified (phosphothreonine). Phosphoserine occurs at positions 275, 277, 280, 284, 290, 294, 297, 300, 323, 329, 334, 337, and 353. The disordered stretch occupies residues 296 to 363; it reads ASDHSVRSHD…TPVKHVDDHT (68 aa). Residues 299-308 are compositionally biased toward basic and acidic residues; the sequence is HSVRSHDRPP. A compositionally biased stretch (polar residues) spans 325–338; the sequence is HSTQSPQQPSNGSL. T354 is modified (phosphothreonine). The region spanning 421–502 is the PDZ 3 domain; the sequence is SMKLVKFRKG…GEEVTILAQK (82 aa). Positions 516 to 584 constitute an SH3 domain; the sequence is GDSFYIRTHF…PNKNRAEQLA (69 aa). Residues S617 and S622 each carry the phosphoserine modification. The tract at residues 633 to 876 is occludin (OCLN)-binding region; it reads YERVVLREAG…GTPPESAITR (244 aa). The Guanylate kinase-like domain maps to 690–791; the sequence is RLHTIKQIID…WYGALKEAIQ (102 aa). Position 809 is a phosphothreonine (T809). 2 positions are modified to phosphoserine: S810 and S821. Y822 carries the phosphotyrosine modification. Phosphoserine occurs at positions 824, 828, and 837. Disordered regions lie at residues 825–941 and 1023–1042; these read APGS…PASS and ALGH…YDPQ. Residues T846, T848, T854, T861, and T868 each carry the phosphothreonine modification. The span at 879–892 shows a compositional bias: basic and acidic residues; the sequence is EPVREDSSGMHHEN. Positions 893–906 are enriched in low complexity; sequence QTYPPYSPQAQPQA. A Phosphoserine modification is found at S912. At S1071 the chain carries Phosphoserine. A disordered region spans residues 1092 to 1585; sequence SYYDDKQPYP…SSTQPPEFDS (494 aa). The segment covering 1106 to 1124 has biased composition (basic and acidic residues); the sequence is DTQHPRDLDSRQHPEEASE. Phosphotyrosine occurs at positions 1139 and 1164. The segment at 1150–1370 is actin-binding region (ABR); that stretch reads RTSTLRHEEQ…FDRRSFESKP (221 aa). 2 stretches are compositionally biased toward basic and acidic residues: residues 1268 to 1285 and 1335 to 1346; these read KMFE…KDVN and PPEDIVRSNHYD. Residue Y1353 is modified to Phosphotyrosine. Residue S1365 is modified to Phosphoserine. Low complexity predominate over residues 1388–1399; sequence SQSQPNFSSYSS. Residues 1401–1418 show a composition bias toward basic and acidic residues; that stretch reads GKPETDAMDRSFSEKRYD. Residue S1411 is modified to Phosphoserine. Composition is skewed to polar residues over residues 1442–1468 and 1509–1519; these read NSSL…NSYI and GAEQTQKTITP. Residues 1535–1544 are compositionally biased toward basic and acidic residues; sequence PFERKFESPK. 2 positions are modified to phosphoserine: S1542 and S1614. The ZU5 domain maps to 1631–1765; sequence ATARGIFNSN…NCVSVLIDHF (135 aa).

Belongs to the MAGUK family. As to quaternary structure, homodimer. Forms heterodimers TJP3. Forms a heterodimer (via PDZ2 domain) with TJP2/ZO2 (via PDZ2 domain). Interacts with OCLN. Interacts with CALM, claudins, CGN/cingulin, CXADR, GJA12, GJD3 and UBN1. Interacts (via ZU5 domain) with CDC42BPB and MYZAP. Interacts (via PDZ domain) with GJA1. Interacts (via PDZ domains) with ANKRD2. Interacts with BVES (via the C-terminus cytoplasmic tail). Interacts with HSPA4. Interacts with KIRREL1. Interacts with DLL1. Interacts with USP53 (via the C-terminal region). Interacts with DNMBP (via C-terminal domain); required for the apical cell-cell junction localization of DNMBP. Interacts with SPEF1. Interacts (via N-terminus) with CTNNA1. Interacts with CLDN18. Interacts with CLDN16 (via TRV motif); this is a prerequisite for anchoring of CLDN16 at the tight junction. Interacts with PKP1; the interaction facilitates TJP1/ZO-1 localization to the plasma membrane. In terms of processing, phosphorylated at tyrosine redidues in response to epidermal growth factor (EGF). This response is dependent on an intact actin microfilament system. Dephosphorylated by Ptprj.

The protein resides in the cell membrane. It is found in the cell junction. Its subcellular location is the tight junction. The protein localises to the gap junction. Functionally, tjpP1, Tjp2, and Tjp3 are closely related scaffolding proteins that link tight junction (TJ) transmembrane proteins such as claudins, junctional adhesion molecules, and occludin to the actin cytoskeleton. The tight junction acts to limit movement of substances through the paracellular space and as a boundary between the compositionally distinct apical and basolateral plasma membrane domains of epithelial and endothelial cells. Necessary for lumenogenesis, and particularly efficient epithelial polarization and barrier formation. Plays a role in the regulation of cell migration by targeting Cdc42bpb to the leading edge of migrating cells. Plays an important role in podosome formation and associated function, thus regulating cell adhesion and matrix remodeling. With Tjp2 and Tjp3, participates in the junctional retention and stability of the transcription factor Dbpa, but is not involved in its shuttling to the nucleus. May play a role in mediating cell morphology changes during ameloblast differentiation via its role in tight junctions. The sequence is that of Tight junction protein ZO-1 from Rattus norvegicus (Rat).